The chain runs to 585 residues: Lipoprotein LpqB (585 aa).

An N-terminal signal peptide occupies residues 1–18; it reads MKRLLTVLVVGLVALVSG. A lipid anchor (N-palmitoyl cysteine) is attached at Cys-19. The S-diacylglycerol cysteine moiety is linked to residue Cys-19. Residues 24-46 form a disordered region; the sequence is SSSSPQAIGTVERPAPPSLPKPT. A compositionally biased stretch (pro residues) spans 37-46; it reads PAPPSLPKPT.

It belongs to the LpqB lipoprotein family. In terms of assembly, interacts with MtrB, probably extracytoplasmically via its sensor domain.

The protein resides in the cell membrane. It localises to the secreted. The protein localises to the cell wall. May modulate activity of the MtrAB system in controlling homeostasis of the cell wall and cell division. In Mycolicibacterium smegmatis (strain ATCC 700084 / mc(2)155) (Mycobacterium smegmatis), this protein is Lipoprotein LpqB.